A 149-amino-acid chain; its full sequence is 3-dehydroquinate dehydratase (149 aa).

Tyr22 acts as the Proton acceptor in catalysis. The substrate site is built by Asn73, His79, and Asp86. The active-site Proton donor is His99. Residues Leu100–Ser101 and Arg110 contribute to the substrate site.

It belongs to the type-II 3-dehydroquinase family. As to quaternary structure, homododecamer.

The enzyme catalyses 3-dehydroquinate = 3-dehydroshikimate + H2O. It functions in the pathway metabolic intermediate biosynthesis; chorismate biosynthesis; chorismate from D-erythrose 4-phosphate and phosphoenolpyruvate: step 3/7. Its function is as follows. Catalyzes a trans-dehydration via an enolate intermediate. The sequence is that of 3-dehydroquinate dehydratase from Prochlorococcus marinus (strain SARG / CCMP1375 / SS120).